Here is a 236-residue protein sequence, read N- to C-terminus: uncharacterized protein (236 aa).

The segment at 186 to 236 (HGRGDTRNLNDITGLGHERERDRENTHYEKKPKLDSDSEVDIRSFRQDMDL) is disordered. Residues 201–236 (GHERERDRENTHYEKKPKLDSDSEVDIRSFRQDMDL) show a composition bias toward basic and acidic residues. The residue at position 221 (Ser221) is a Phosphoserine.

This is an uncharacterized protein from Saccharomyces cerevisiae (strain ATCC 204508 / S288c) (Baker's yeast).